Here is a 106-residue protein sequence, read N- to C-terminus: MEVKISTFLQIAVLIVLGIHLIAAGQDTDGKEKSDEYELFTVEYCGTNCTQLENGSWTACTGKNGTCRCFHENDKKVGLCLSTEYTDFSEYPDPNSEEIKAASPLP.

Positions 1-24 (MEVKISTFLQIAVLIVLGIHLIAA) are cleaved as a signal peptide. Cystine bridges form between Cys45–Cys67, Cys49–Cys69, and Cys60–Cys80. 3 N-linked (GlcNAc...) asparagine glycosylation sites follow: Asn48, Asn54, and Asn64.

The protein localises to the secreted. Functionally, salivary chemokine-binding protein which binds to host chemokines CXCL1, CXCL2 and CXCL8. This Ixodes ricinus (Common tick) protein is Evasin P1168.